A 67-amino-acid polypeptide reads, in one-letter code: Large ribosomal subunit protein uL29 (67 aa).

This sequence belongs to the universal ribosomal protein uL29 family.

This chain is Large ribosomal subunit protein uL29, found in Methanothrix thermoacetophila (strain DSM 6194 / JCM 14653 / NBRC 101360 / PT) (Methanosaeta thermophila).